A 79-amino-acid chain; its full sequence is Conotoxin VnMSGL-0122 (79 aa).

The first 20 residues, 1–20 (MSGLGIMVLALLLLVFMATS), serve as a signal peptide directing secretion. Residues 21 to 44 (HQDGGGKQATQRDAINVRRRRSIT) constitute a propeptide that is removed on maturation. Cystine bridges form between C52-C64, C56-C73, and C63-C77. Position 78 is a leucine amide (L78).

It belongs to the conotoxin O3 superfamily. In terms of tissue distribution, expressed by the venom duct.

Its subcellular location is the secreted. The chain is Conotoxin VnMSGL-0122 from Conus ventricosus (Mediterranean cone).